The chain runs to 25 residues: RGSNLTIHPLRNIRDIFYVGNITIG.

Asn4 and Asn21 each carry an N-linked (GlcNAc...) asparagine glycan.

The protein belongs to the peptidase A1 family. N-glycosylated. As to expression, placental cotyledons.

It is found in the secreted. The protein resides in the extracellular space. The chain is Pregnancy-associated glycoprotein 74 from Bison bison (American bison).